The following is a 461-amino-acid chain: 26S proteasome regulatory subunit 8 (461 aa).

Residue 185–192 participates in ATP binding; it reads GPPGTGKT.

The protein belongs to the AAA ATPase family.

Its subcellular location is the cytoplasm. The protein resides in the nucleus. The 26S proteasome is involved in the ATP-dependent degradation of ubiquitinated proteins. The regulatory (or ATPase) complex confers ATP dependency and substrate specificity to the 26S complex. This chain is 26S proteasome regulatory subunit 8 (psmc5), found in Xenopus laevis (African clawed frog).